The following is a 418-amino-acid chain: Histidine--tRNA ligase (418 aa).

Belongs to the class-II aminoacyl-tRNA synthetase family.

Its subcellular location is the cytoplasm. The enzyme catalyses tRNA(His) + L-histidine + ATP = L-histidyl-tRNA(His) + AMP + diphosphate + H(+). This is Histidine--tRNA ligase from Methanococcus maripaludis (strain C6 / ATCC BAA-1332).